The sequence spans 512 residues: Serine--tRNA ligase, cytoplasmic (512 aa).

Residue Met1 is modified to N-acetylmethionine. The interval 9–61 (RVDKGGDPALIRETQEKRFKDPGLVDQLVKADSEWRRCRFRADNLNKLKNLCS) is interaction with tRNA. Ser241 bears the Phosphoserine mark. Residues Thr271 and Arg302 each contribute to the L-serine site. ATP contacts are provided by residues 302–304 (RQE) and 318–321 (VHQF). Position 323 is an N6-acetyllysine (Lys323). Glu325 is an L-serine binding site. Residue 391 to 394 (ELVS) participates in ATP binding. L-serine contacts are provided by Asn427 and Thr429. The disordered stretch occupies residues 472-512 (KPAPIDQEPSKKQKKQHEGSKKKAKEVTLESQLQNMEVTEA). Residues 479 to 499 (EPSKKQKKQHEGSKKKAKEVT) show a composition bias toward basic and acidic residues. The Nuclear localization signal signature appears at 482-494 (KKQKKQHEGSKKK). Over residues 500 to 512 (LESQLQNMEVTEA) the composition is skewed to polar residues.

Belongs to the class-II aminoacyl-tRNA synthetase family. Type-1 seryl-tRNA synthetase subfamily. In terms of assembly, homodimer. The tRNA molecule may bind across the dimer. Interacts with SIRT2. Interacts with METTL6; interaction is required for the tRNA N(3)-methylcytidine methyltransferase activity of METTL6.

Its subcellular location is the cytoplasm. It is found in the nucleus. The catalysed reaction is tRNA(Ser) + L-serine + ATP = L-seryl-tRNA(Ser) + AMP + diphosphate + H(+). It carries out the reaction tRNA(Sec) + L-serine + ATP = L-seryl-tRNA(Sec) + AMP + diphosphate + H(+). Its pathway is aminoacyl-tRNA biosynthesis; selenocysteinyl-tRNA(Sec) biosynthesis; L-seryl-tRNA(Sec) from L-serine and tRNA(Sec): step 1/1. Its function is as follows. Catalyzes the attachment of serine to tRNA(Ser) in a two-step reaction: serine is first activated by ATP to form Ser-AMP and then transferred to the acceptor end of tRNA(Ser). Is probably also able to aminoacylate tRNA(Sec) with serine, to form the misacylated tRNA L-seryl-tRNA(Sec), which will be further converted into selenocysteinyl-tRNA(Sec). In the nucleus, binds to the VEGFA core promoter and prevents MYC binding and transcriptional activation by MYC. Recruits SIRT2 to the VEGFA promoter, promoting deacetylation of histone H4 at 'Lys-16' (H4K16). Thereby, inhibits the production of VEGFA and sprouting angiogenesis mediated by VEGFA. This is Serine--tRNA ligase, cytoplasmic (SARS1) from Cricetulus griseus (Chinese hamster).